The following is a 468-amino-acid chain: Ubiquitin carboxyl-terminal hydrolase MINDY-1 (468 aa).

Positions methionine 1 to threonine 19 are enriched in polar residues. Residues methionine 1–arginine 105 are disordered. The span at serine 22–alanine 41 shows a compositional bias: basic and acidic residues. Over residues alanine 43 to aspartate 54 the composition is skewed to low complexity. The span at cysteine 68–proline 80 shows a compositional bias: pro residues. Serine 103 carries the post-translational modification Phosphoserine. The active-site Nucleophile is the cysteine 137. Histidine 319 acts as the Proton acceptor in catalysis. Residues glutamine 388–glutamine 427 are ubiquitin-binding domain (UBD). Residues glutamate 423 to glutamine 432 are compositionally biased toward low complexity. Positions glutamate 423–leucine 468 are disordered. The residue at position 440 (serine 440) is a Phosphoserine. Positions alanine 452–leucine 468 are enriched in basic and acidic residues.

It belongs to the MINDY deubiquitinase family. FAM63 subfamily.

It carries out the reaction Thiol-dependent hydrolysis of ester, thioester, amide, peptide and isopeptide bonds formed by the C-terminal Gly of ubiquitin (a 76-residue protein attached to proteins as an intracellular targeting signal).. In terms of biological role, hydrolase that can specifically remove 'Lys-48'-linked conjugated ubiquitin from proteins. Has exodeubiquitinase activity and has a preference for long polyubiquitin chains. May play a regulatory role at the level of protein turnover. This is Ubiquitin carboxyl-terminal hydrolase MINDY-1 (Mindy1) from Mus musculus (Mouse).